Here is a 320-residue protein sequence, read N- to C-terminus: Cilia- and flagella-associated protein 77 (320 aa).

The interval 1-27 (MPEARSSGPDLTRWRKQQQPVRRTVSQ) is disordered. Polar residues predominate over residues 17-27 (QQQPVRRTVSQ).

This sequence belongs to the CFAP77 family. As to quaternary structure, microtubule inner protein component of sperm flagellar doublet microtubules. As to expression, expressed in airway epithelial cells.

It localises to the cytoplasm. Its subcellular location is the cytoskeleton. The protein localises to the cilium axoneme. It is found in the flagellum axoneme. Functionally, microtubule inner protein (MIP) part of the dynein-decorated doublet microtubules (DMTs) in cilia axoneme, which is required for motile cilia beating. In Homo sapiens (Human), this protein is Cilia- and flagella-associated protein 77.